Reading from the N-terminus, the 749-residue chain is 5-methyltetrahydropteroyltriglutamate--homocysteine methyltransferase (749 aa).

5-methyltetrahydropteroyltri-L-glutamate contacts are provided by residues 15–18 (RELK) and Lys-114. Residues 425-427 (IGS) and Glu-478 each bind L-homocysteine. Residues 425–427 (IGS) and Glu-478 each bind L-methionine. Trp-555 serves as a coordination point for 5-methyltetrahydropteroyltri-L-glutamate. Asp-593 lines the L-homocysteine pocket. Asp-593 is a binding site for L-methionine. Glu-599 is a binding site for 5-methyltetrahydropteroyltri-L-glutamate. Zn(2+)-binding residues include His-636, Cys-638, and Glu-660. The Proton donor role is filled by His-689. Cys-721 contacts Zn(2+).

The protein belongs to the vitamin-B12 independent methionine synthase family. It depends on Zn(2+) as a cofactor.

It catalyses the reaction 5-methyltetrahydropteroyltri-L-glutamate + L-homocysteine = tetrahydropteroyltri-L-glutamate + L-methionine. It participates in amino-acid biosynthesis; L-methionine biosynthesis via de novo pathway; L-methionine from L-homocysteine (MetE route): step 1/1. Its function is as follows. Catalyzes the transfer of a methyl group from 5-methyltetrahydrofolate to homocysteine resulting in methionine formation. The protein is 5-methyltetrahydropteroyltriglutamate--homocysteine methyltransferase of Streptococcus pneumoniae serotype 19F (strain G54).